Here is a 20-residue protein sequence, read N- to C-terminus: Peroxidase 1 (20 aa).

Residue His-14 participates in heme binding. Thr-15 is a binding site for Ca(2+).

It belongs to the peroxidase family. Classical plant (class III) peroxidase subfamily. Requires Ca(2+) as cofactor. Heme b is required as a cofactor.

The protein localises to the secreted. The catalysed reaction is 2 a phenolic donor + H2O2 = 2 a phenolic radical donor + 2 H2O. In terms of biological role, removal of H(2)O(2), oxidation of toxic reductants, biosynthesis and degradation of lignin, suberization, auxin catabolism, response to environmental stresses such as wounding, pathogen attack and oxidative stress. These functions might be dependent on each isozyme/isoform in each plant tissue. The polypeptide is Peroxidase 1 (Betula pendula (European white birch)).